We begin with the raw amino-acid sequence, 90 residues long: U7-theraphotoxin-Hhn1a 6 (90 aa).

Residues 1-19 (MKTAIFTVVLALAVFAVLS) form the signal peptide. Positions 20 to 50 (FGWEANEKALSEEFTELIHEKEAASEAEARE) are excised as a propeptide. 3 disulfides stabilise this stretch: Cys-51–Cys-65, Cys-58–Cys-70, and Cys-64–Cys-81.

It belongs to the neurotoxin 10 (Hwtx-1) family. 13 (Hntx-13) subfamily. Expressed by the venom gland.

The protein resides in the secreted. Functionally, ion channel inhibitor. This Cyriopagopus hainanus (Chinese bird spider) protein is U7-theraphotoxin-Hhn1a 6.